A 344-amino-acid polypeptide reads, in one-letter code: L-rhamnose-proton symporter (344 aa).

Transmembrane regions (helical) follow at residues 5–25 (ILLG…FYAP), 38–58 (WAIA…YWLL), 72–92 (ILLP…GYGL), 101–121 (MGIG…TPII), 137–157 (TLIG…AGLL), 175–195 (LALA…MSAA), 214–234 (LPSY…FCII), 259–279 (ILFS…YAWG), 289–309 (FMSW…VGLL), and 323–343 (VLCI…LGMA).

The protein belongs to the L-rhamnose transporter (TC 2.A.7.6) family.

It localises to the cell inner membrane. It catalyses the reaction L-rhamnopyranose(in) + H(+)(in) = L-rhamnopyranose(out) + H(+)(out). Uptake of L-rhamnose across the cytoplasmic membrane with the concomitant transport of protons into the cell (symport system). This chain is L-rhamnose-proton symporter, found in Mannheimia succiniciproducens (strain KCTC 0769BP / MBEL55E).